The sequence spans 193 residues: NADH-quinone oxidoreductase subunit B (193 aa).

[4Fe-4S] cluster contacts are provided by Cys72, Cys73, Cys137, and Cys167.

The protein belongs to the complex I 20 kDa subunit family. As to quaternary structure, NDH-1 is composed of 14 different subunits. Subunits NuoB, C, D, E, F, and G constitute the peripheral sector of the complex. Requires [4Fe-4S] cluster as cofactor.

The protein localises to the cell inner membrane. It carries out the reaction a quinone + NADH + 5 H(+)(in) = a quinol + NAD(+) + 4 H(+)(out). Functionally, NDH-1 shuttles electrons from NADH, via FMN and iron-sulfur (Fe-S) centers, to quinones in the respiratory chain. The immediate electron acceptor for the enzyme in this species is believed to be ubiquinone. Couples the redox reaction to proton translocation (for every two electrons transferred, four hydrogen ions are translocated across the cytoplasmic membrane), and thus conserves the redox energy in a proton gradient. The protein is NADH-quinone oxidoreductase subunit B of Caulobacter vibrioides (strain ATCC 19089 / CIP 103742 / CB 15) (Caulobacter crescentus).